The following is a 487-amino-acid chain: Serine/threonine-protein kinase 4 (487 aa).

Met1 carries the N-acetylmethionine modification. Position 3 is a phosphothreonine (Thr3). One can recognise a Protein kinase domain in the interval 30-281 (FDVLEKLGEG…ATQLLQHPFV (252 aa)). Residues 36 to 44 (LGEGSYGSV) and Lys59 contribute to the ATP site. The active-site Proton acceptor is Asp149. Position 183 is a phosphothreonine; by autocatalysis (Thr183). Ser265 carries the phosphoserine modification. Residues 290 to 310 (LRDLINEAMDVKLKRQEAQQR) adopt a coiled-coil conformation. The tract at residues 305-337 (QEAQQREVDQDDEENSEEDELDSGTMVRAVGDE) is disordered. Acidic residues predominate over residues 313–326 (DQDDEENSEEDELD). Ser320 carries the post-translational modification Phosphoserine. Phosphothreonine is present on residues Thr340 and Thr367. Thr387 is modified (phosphothreonine; by PKB/AKT1). Phosphoserine occurs at positions 410 and 414. Tyr433 carries the post-translational modification Phosphotyrosine. The SARAH domain maps to 433-480 (YEFLKSWTVEDLQKRLLALDPMMEQEIEEIRQKYQSKRQPILDAIEAK).

The protein belongs to the protein kinase superfamily. STE Ser/Thr protein kinase family. STE20 subfamily. As to quaternary structure, homodimer; mediated via the coiled-coil region. Interacts with NORE1, which inhibits autoactivation. Interacts with and stabilizes SAV1. Interacts with RASSF1. Interacts with FOXO3. Interacts with RASSF2 (via SARAH domain). Interacts with AR, PKB/AKT1, TNNI3 and SIRT1. Interacts with DLG5 (via PDZ domain 3). Interacts with MARK3 and SCRIB in the presence of DLG5. Mg(2+) is required as a cofactor. Autophosphorylated on serine and threonine residues. Phosphorylation at Thr-387 by PKB/AKT1, leads to inhibition of its: kinase activity, nuclear translocation and autophosphorylation at Thr-183. It also diminishes its cleavage by caspases and its ability to phosphorylate FOXO3. In terms of processing, proteolytically cleaved by caspase-3 during apoptosis at Asp-326 and Asp-349 resulting in a 37 kDa or a 39 kDa subunit respectively. The 39 kDa subunit is further cleaved into the 37 kDa form. Proteolytic cleavage results in kinase activation and nuclear translocation of the truncated form (MST1/N). It is less likely that cleavage at Asp-349 is a prerequisite for activation as this site is not conserved in the murine ortholog.

Its subcellular location is the cytoplasm. It localises to the nucleus. It catalyses the reaction L-seryl-[protein] + ATP = O-phospho-L-seryl-[protein] + ADP + H(+). The enzyme catalyses L-threonyl-[protein] + ATP = O-phospho-L-threonyl-[protein] + ADP + H(+). Inhibited by the C-terminal non-catalytic region. Activated by caspase-cleavage. Full activation also requires homodimerization and autophosphorylation of Thr-183. Activated by RASSF1 which acts by preventing its dephosphorylation. Functionally, stress-activated, pro-apoptotic kinase which, following caspase-cleavage, enters the nucleus and induces chromatin condensation followed by internucleosomal DNA fragmentation. Key component of the Hippo signaling pathway which plays a pivotal role in organ size control and tumor suppression by restricting proliferation and promoting apoptosis. The core of this pathway is composed of a kinase cascade wherein STK3/MST2 and STK4/MST1, in complex with its regulatory protein SAV1, phosphorylates and activates LATS1/2 in complex with its regulatory protein MOB1, which in turn phosphorylates and inactivates YAP1 oncoprotein and WWTR1/TAZ. Phosphorylation of YAP1 by LATS2 inhibits its translocation into the nucleus to regulate cellular genes important for cell proliferation, cell death, and cell migration. STK3/MST2 and STK4/MST1 are required to repress proliferation of mature hepatocytes, to prevent activation of facultative adult liver stem cells (oval cells), and to inhibit tumor formation. Phosphorylates 'Ser-14' of histone H2B (H2BS14ph) during apoptosis. Phosphorylates FOXO3 upon oxidative stress, which results in its nuclear translocation and cell death initiation. Phosphorylates MOBKL1A, MOBKL1B and RASSF2. Phosphorylates TNNI3 (cardiac Tn-I) and alters its binding affinity to TNNC1 (cardiac Tn-C) and TNNT2 (cardiac Tn-T). Phosphorylates FOXO1 on 'Ser-212' and regulates its activation and stimulates transcription of PMAIP1 in a FOXO1-dependent manner. Phosphorylates SIRT1 and inhibits SIRT1-mediated p53/TP53 deacetylation, thereby promoting p53/TP53 dependent transcription and apoptosis upon DNA damage. Acts as an inhibitor of PKB/AKT1. Phosphorylates AR on 'Ser-650' and suppresses its activity by intersecting with PKB/AKT1 signaling and antagonizing formation of AR-chromatin complexes. This is Serine/threonine-protein kinase 4 (STK4) from Otolemur garnettii (Small-eared galago).